Reading from the N-terminus, the 353-residue chain is Mitochondrial import inner membrane translocase subunit TIM50 (353 aa).

The N-terminal 44 residues, methionine 1–glycine 44, are a transit peptide targeting the mitochondrion. Residues arginine 25–proline 60 are disordered. Serine 45 is modified (phosphoserine). The Mitochondrial matrix portion of the chain corresponds to serine 45–lysine 65. The segment covering glutamine 49–proline 60 has biased composition (low complexity). The helical transmembrane segment at valine 66–phenylalanine 86 threads the bilayer. The Mitochondrial intermembrane portion of the chain corresponds to glycine 87–proline 353. The region spanning tyrosine 143–isoleucine 286 is the FCP1 homology domain. Serine 341 bears the Phosphoserine mark.

It belongs to the TIM50 family. As to quaternary structure, component of the TIM23 complex at least composed of TIMM23, TIMM17 (TIMM17A or TIMM17B) and TIMM50; within this complex, directly interacts with TIMM23. The complex interacts with the TIMM44 component of the PAM complex and with DNAJC15. In terms of assembly, interacts with COIL and snRNPs. As to expression, widely expressed. Expressed at higher level in brain, kidney and liver (at protein level).

It localises to the mitochondrion inner membrane. It is found in the nucleus speckle. In terms of biological role, essential component of the TIM23 complex, a complex that mediates the translocation of transit peptide-containing proteins across the mitochondrial inner membrane. Has some phosphatase activity in vitro; however such activity may not be relevant in vivo. May participate in the release of snRNPs and SMN from the Cajal body. This chain is Mitochondrial import inner membrane translocase subunit TIM50 (TIMM50), found in Homo sapiens (Human).